Consider the following 373-residue polypeptide: tRNA-specific 2-thiouridylase MnmA (373 aa).

ATP-binding positions include 12-19 (GMSGGVDS) and Met-38. The tract at residues 98 to 100 (NPD) is interaction with target base in tRNA. Cys-103 serves as the catalytic Nucleophile. A disulfide bridge connects residues Cys-103 and Cys-200. Gly-127 provides a ligand contact to ATP. The interaction with tRNA stretch occupies residues 150 to 152 (KDQ). Cys-200 (cysteine persulfide intermediate) is an active-site residue. The interval 312–313 (RY) is interaction with tRNA.

This sequence belongs to the MnmA/TRMU family.

It localises to the cytoplasm. It carries out the reaction S-sulfanyl-L-cysteinyl-[protein] + uridine(34) in tRNA + AH2 + ATP = 2-thiouridine(34) in tRNA + L-cysteinyl-[protein] + A + AMP + diphosphate + H(+). Its function is as follows. Catalyzes the 2-thiolation of uridine at the wobble position (U34) of tRNA, leading to the formation of s(2)U34. The polypeptide is tRNA-specific 2-thiouridylase MnmA (Streptococcus agalactiae serotype Ia (strain ATCC 27591 / A909 / CDC SS700)).